The sequence spans 133 residues: L-cystatin (133 aa).

The first 19 residues, 1–19 (MEGYNILAVLIILVGVSMG), serve as a signal peptide directing secretion. Gln-20 is modified (pyrrolidone carboxylic acid). The Secondary area of contact signature appears at 67–71 (QVVSG). 2 cysteine pairs are disulfide-bonded: Cys-85–Cys-98 and Cys-109–Cys-129.

This sequence belongs to the cystatin family. Expressed in hemocytes and slightly in heart.

It localises to the cytoplasmic granule. Its function is as follows. Tight-binding inhibitor for papain. It has an important role in the protection of cells, antimicrobial activity against Gram-negative bacteria, defense against invading microbes, and response to external stimuli. This Tachypleus tridentatus (Japanese horseshoe crab) protein is L-cystatin.